The following is a 258-amino-acid chain: UPF0246 protein VS_0505 (258 aa).

It belongs to the UPF0246 family.

The sequence is that of UPF0246 protein VS_0505 from Vibrio atlanticus (strain LGP32) (Vibrio splendidus (strain Mel32)).